Here is a 503-residue protein sequence, read N- to C-terminus: Aspartyl/glutamyl-tRNA(Asn/Gln) amidotransferase subunit B (503 aa).

It belongs to the GatB/GatE family. GatB subfamily. Heterotrimer of A, B and C subunits.

It carries out the reaction L-glutamyl-tRNA(Gln) + L-glutamine + ATP + H2O = L-glutaminyl-tRNA(Gln) + L-glutamate + ADP + phosphate + H(+). The enzyme catalyses L-aspartyl-tRNA(Asn) + L-glutamine + ATP + H2O = L-asparaginyl-tRNA(Asn) + L-glutamate + ADP + phosphate + 2 H(+). In terms of biological role, allows the formation of correctly charged Asn-tRNA(Asn) or Gln-tRNA(Gln) through the transamidation of misacylated Asp-tRNA(Asn) or Glu-tRNA(Gln) in organisms which lack either or both of asparaginyl-tRNA or glutaminyl-tRNA synthetases. The reaction takes place in the presence of glutamine and ATP through an activated phospho-Asp-tRNA(Asn) or phospho-Glu-tRNA(Gln). This Roseobacter denitrificans (strain ATCC 33942 / OCh 114) (Erythrobacter sp. (strain OCh 114)) protein is Aspartyl/glutamyl-tRNA(Asn/Gln) amidotransferase subunit B.